The chain runs to 438 residues: Xylose isomerase (438 aa).

Catalysis depends on residues His102 and Asp105. Residues Glu233, Glu269, His272, Asp297, Asp308, Asp310, and Asp340 each coordinate Mg(2+).

Belongs to the xylose isomerase family. As to quaternary structure, homotetramer. The cofactor is Mg(2+).

Its subcellular location is the cytoplasm. The catalysed reaction is alpha-D-xylose = alpha-D-xylulofuranose. The protein is Xylose isomerase of Solibacter usitatus (strain Ellin6076).